The chain runs to 655 residues: A-type voltage-gated potassium channel KCND3 (655 aa).

Topologically, residues 1-182 (MAAGVAAWLP…FENPHTSTLA (182 aa)) are cytoplasmic. The segment at 6-21 (AAWLPFARAAAIGWMP) is interaction with KCNIP1 and KCNIP2. The segment at 70–78 (EKEFFFNED) is interaction with KCNIP1. Residues His104, Cys110, Cys131, and Cys132 each coordinate Zn(2+). Phosphoserine is present on Ser153. A helical transmembrane segment spans residues 183–204 (LVFYYVTGFFIAVSVITNVVET). The Extracellular portion of the chain corresponds to 205-223 (VPCGTVPGSKELPCGERYS). Residues 224-246 (VAFFCLDTACVMIFTVEYLLRLF) traverse the membrane as a helical segment. Topologically, residues 247–253 (AAPSRYR) are cytoplasmic. A helical membrane pass occupies residues 254-277 (FIRSVMSIIDVVAIMPYYIGLVMT). Residues 278–283 (NNEDVS) lie on the Extracellular side of the membrane. Residues 284-306 (GAFVTLRVFRVFRIFKFSRHSQG) form a helical; Voltage-sensor membrane-spanning segment. The Cytoplasmic segment spans residues 307–318 (LRILGYTLKSCA). The chain crosses the membrane as a helical span at residues 319–343 (SELGFLLFSLTMAIIIFATVMFYAE). Over 344–352 (KGSSASKFT) the chain is Extracellular. The helical intramembrane region spans 353 to 366 (SIPASFWYTIVTMT). Residues Thr367, Leu368, Gly369, and Tyr370 each contribute to the K(+) site. The Selectivity filter motif lies at 367–372 (TLGYGD). An intramembrane segment occupies 367–374 (TLGYGDMV). A helical transmembrane segment spans residues 378–400 (IAGKIFGSICSLSGVLVIALPVP). At 401-655 (VIVSNFSRIY…TSNVVKVSAL (255 aa)) the chain is on the cytoplasmic side. Residue Thr459 is modified to Phosphothreonine. Positions 470–487 (SLIESQHHHLLHCLEKTT) are interaction with KCNIP1 and KCNIP2. The segment at 472-487 (IESQHHHLLHCLEKTT) is mediates dendritic targeting. Residues 523-565 (SSMQNYPSTRSPSLSSHSGLTTTCCSRRSKKTTHLPNSNLPAT) form a disordered region. A compositionally biased stretch (low complexity) spans 529–548 (PSTRSPSLSSHSGLTTTCCS). 2 positions are modified to phosphoserine: Ser569 and Ser585. Positions 615-655 (ISIPTPPALTPEGESRPPPASPGPNTNIPSITSNVVKVSAL) are disordered. A compositionally biased stretch (polar residues) spans 637–655 (GPNTNIPSITSNVVKVSAL).

Belongs to the potassium channel family. D (Shal) (TC 1.A.1.2) subfamily. Kv4.3/KCND3 sub-subfamily. Homotetramer. Heterotetramer with KCND2. Associates with the regulatory subunit KCNIP3. Associates with the regulatory subunit KCNIP4. Interacts with KCNE1, KCNE2, SCN1B and KCNAB1 and DLG1. Component of heteromultimeric potassium channels. Identified in potassium channel complexes containing KCND1, KCND2, KCND3, KCNIP1, KCNIP2, KCNIP3, KCNIP4, DPP6 and DPP10. Interacts with KCNIP1; each KCNIP1 monomer interacts with two adjacent KCND3 subunits, through both the N-terminal inactivation ball of a KCND3 subunit and a C-terminal helix from the adjacent KCND3 subunit, clamping them together; this interaction stabilizes the tetrameric form and modulates the channel gating kinetics namely channel activation and inactivation kinetics and rate of recovery from inactivation. Interacts with DPP6; this interaction modulates the channel gating kinetics namely channel activation and inactivation kinetics and rate of recovery from inactivation. Interacts with KCNIP2; each KCNIP2 monomer interacts with two adjacent KCND3 subunits, through both the N-terminal inactivation ball of a KCND3 subunit and a C-terminal helix from the adjacent KCND3 subunit, clamping them together; this interaction modulates the channel gating kinetics. In terms of processing, regulated through phosphorylation at Ser-569 by CaMK2D.

It is found in the cell membrane. It localises to the sarcolemma. Its subcellular location is the cell projection. The protein resides in the dendrite. It catalyses the reaction K(+)(in) = K(+)(out). In terms of biological role, pore-forming (alpha) subunit of voltage-gated A-type potassium channels that mediates transmembrane potassium transport in excitable membranes, in brain and heart. In cardiomyocytes, may generate the transient outward potassium current I(To). In neurons, may conduct the transient subthreshold somatodendritic A-type potassium current (ISA). Kinetics properties are characterized by fast activation at subthreshold membrane potentials, rapid inactivation, and quick recovery from inactivation. Channel properties are modulated by interactions with regulatory subunits. Interaction with the regulatory subunits KCNIP1 or KCNIP2 modulates the channel gating kinetics namely channel activation and inactivation kinetics and rate of recovery from inactivation. Likewise, interaction with DPP6 modulates the channel gating kinetics namely channel activation and inactivation kinetics. The polypeptide is A-type voltage-gated potassium channel KCND3 (Mus musculus (Mouse)).